A 40-amino-acid chain; its full sequence is Photosystem II reaction center protein J (40 aa).

The chain crosses the membrane as a helical span at residues 8-28; that stretch reads IPLWIIGTVAGILVIGLVGIF.

Belongs to the PsbJ family. In terms of assembly, PSII is composed of 1 copy each of membrane proteins PsbA, PsbB, PsbC, PsbD, PsbE, PsbF, PsbH, PsbI, PsbJ, PsbK, PsbL, PsbM, PsbT, PsbX, PsbY, PsbZ, Psb30/Ycf12, at least 3 peripheral proteins of the oxygen-evolving complex and a large number of cofactors. It forms dimeric complexes.

The protein localises to the plastid. The protein resides in the chloroplast thylakoid membrane. One of the components of the core complex of photosystem II (PSII). PSII is a light-driven water:plastoquinone oxidoreductase that uses light energy to abstract electrons from H(2)O, generating O(2) and a proton gradient subsequently used for ATP formation. It consists of a core antenna complex that captures photons, and an electron transfer chain that converts photonic excitation into a charge separation. This chain is Photosystem II reaction center protein J, found in Spinacia oleracea (Spinach).